The sequence spans 401 residues: Cartilage-associated protein (401 aa).

Positions 1–26 (MEPGRRGAAALLALLCVACALRAGRA) are cleaved as a signal peptide. N-linked (GlcNAc...) asparagine glycans are attached at residues Asn-87 and Asn-363.

It belongs to the leprecan family. As to expression, found in articular chondrocytes. Expressed in a variety of tissues.

Its subcellular location is the secreted. It localises to the extracellular space. It is found in the extracellular matrix. In terms of biological role, necessary for efficient 3-hydroxylation of fibrillar collagen prolyl residues. The sequence is that of Cartilage-associated protein (CRTAP) from Homo sapiens (Human).